Consider the following 138-residue polypeptide: Nucleoside diphosphate kinase (138 aa).

ATP-binding residues include Lys11, Phe59, Arg87, Thr93, Arg104, and Asn114. Residue His117 is the Pros-phosphohistidine intermediate of the active site.

It belongs to the NDK family. The cofactor is Mg(2+).

It localises to the cytoplasm. It carries out the reaction a 2'-deoxyribonucleoside 5'-diphosphate + ATP = a 2'-deoxyribonucleoside 5'-triphosphate + ADP. It catalyses the reaction a ribonucleoside 5'-diphosphate + ATP = a ribonucleoside 5'-triphosphate + ADP. Functionally, major role in the synthesis of nucleoside triphosphates other than ATP. The ATP gamma phosphate is transferred to the NDP beta phosphate via a ping-pong mechanism, using a phosphorylated active-site intermediate. The sequence is that of Nucleoside diphosphate kinase from Saccharolobus islandicus (strain Y.N.15.51 / Yellowstone #2) (Sulfolobus islandicus).